Reading from the N-terminus, the 253-residue chain is UPF0758 protein Bxeno_A3578 (253 aa).

The 123-residue stretch at Leu-131–Pro-253 folds into the MPN domain. Positions 202, 204, and 215 each coordinate Zn(2+). The short motif at His-202 to Asp-215 is the JAMM motif element.

The protein belongs to the UPF0758 family.

This chain is UPF0758 protein Bxeno_A3578, found in Paraburkholderia xenovorans (strain LB400).